Consider the following 109-residue polypeptide: Large ribosomal subunit protein uL24 (109 aa).

A disordered region spans residues 85 to 109; it reads KYGTDPKTNKKVRLSRKTNNLVGGQ.

The protein belongs to the universal ribosomal protein uL24 family. Part of the 50S ribosomal subunit.

In terms of biological role, one of two assembly initiator proteins, it binds directly to the 5'-end of the 23S rRNA, where it nucleates assembly of the 50S subunit. Its function is as follows. One of the proteins that surrounds the polypeptide exit tunnel on the outside of the subunit. This chain is Large ribosomal subunit protein uL24, found in Mycoplasmoides gallisepticum (strain R(low / passage 15 / clone 2)) (Mycoplasma gallisepticum).